The sequence spans 329 residues: Ketol-acid reductoisomerase (NADP(+)) (329 aa).

Residues 1–181 form the KARI N-terminal Rossmann domain; sequence MKIYYDQDAD…GGTRGGVLTT (181 aa). NADP(+)-binding positions include 24-27, R47, and 82-85; these read YGSQ and DQHQ. H107 is a catalytic residue. G133 provides a ligand contact to NADP(+). Residues 182–327 form the KARI C-terminal knotted domain; sequence TFKEETETDL…AKLRGMMSWL (146 aa). Positions 190, 194, 226, and 230 each coordinate Mg(2+). S251 serves as a coordination point for substrate.

It belongs to the ketol-acid reductoisomerase family. The cofactor is Mg(2+).

It catalyses the reaction (2R)-2,3-dihydroxy-3-methylbutanoate + NADP(+) = (2S)-2-acetolactate + NADPH + H(+). It carries out the reaction (2R,3R)-2,3-dihydroxy-3-methylpentanoate + NADP(+) = (S)-2-ethyl-2-hydroxy-3-oxobutanoate + NADPH + H(+). It participates in amino-acid biosynthesis; L-isoleucine biosynthesis; L-isoleucine from 2-oxobutanoate: step 2/4. It functions in the pathway amino-acid biosynthesis; L-valine biosynthesis; L-valine from pyruvate: step 2/4. Functionally, involved in the biosynthesis of branched-chain amino acids (BCAA). Catalyzes an alkyl-migration followed by a ketol-acid reduction of (S)-2-acetolactate (S2AL) to yield (R)-2,3-dihydroxy-isovalerate. In the isomerase reaction, S2AL is rearranged via a Mg-dependent methyl migration to produce 3-hydroxy-3-methyl-2-ketobutyrate (HMKB). In the reductase reaction, this 2-ketoacid undergoes a metal-dependent reduction by NADPH to yield (R)-2,3-dihydroxy-isovalerate. The polypeptide is Ketol-acid reductoisomerase (NADP(+)) (Solidesulfovibrio magneticus (strain ATCC 700980 / DSM 13731 / RS-1) (Desulfovibrio magneticus)).